A 621-amino-acid polypeptide reads, in one-letter code: Protein Rep78 (621 aa).

In terms of domain architecture, PV NS1-Nuc spans 1 to 199 (MPGFYEIVIK…AQHLTHVSQT (199 aa)). Residues E83, H90, and H92 each coordinate a divalent metal cation. An RCR-2 motif is present at residues 90-92 (HMH). The For nuclease activity role is filled by Y156. The RCR-3 motif lies at 156–160 (YLLPK). Positions 196–211 (VSQTQEQNKENQNPNS) are enriched in polar residues. The interval 196–216 (VSQTQEQNKENQNPNSDAPVI) is disordered. Residues 308-463 (DPQYAASVFL…LDHDFGKVTK (156 aa)) enclose the SF3 helicase domain. 334–341 (GPATTGKT) lines the ATP pocket. Residues 489 to 520 (GGAKKRPAPSDADISEPKRVRESVAQPSTSDA) are disordered.

As to quaternary structure, hexamer when associated with the viral DNA ori sequence. Interacts with host PRKX. Interacts with host TOPORS. Interacts with host TBP and SUB1/PC4; these interactions play important roles in transcriptional regulation. A divalent metal cation is required as a cofactor.

The protein resides in the host nucleus. Its function is as follows. Plays an essential role in the initiation of viral DNA synthesis. Binds specifically to an inverted terminal repeat element (ITR) on the 3' and 5' ends of the viral DNA, where it cleaves a site specifically to generate a priming site for initiation of the synthesis of a complementary strand. Also plays a role as transcriptional regulator, DNA helicase and as key factors in site-specific integration of the viral genome. Regulates host PKA activity by interacting with host PRKX as a mechanism of interfering with helper virus propagation and promoting its own replication. Inhibits the host cell cycle G1/S, S and G2/M transitions. These arrests may provide essential cellular factors for viral DNA replication. This chain is Protein Rep78 (Rep78), found in Adeno-associated virus 2 (isolate Srivastava/1982) (AAV-2).